Reading from the N-terminus, the 205-residue chain is Arginine exporter protein ArgO (205 aa).

Transmembrane regions (helical) follow at residues 1–21, 42–62, 67–87, 111–131, 147–167, and 182–202; these read MLAVFLQGFALSAAMILPLGP, LCALSDIILICAGIFGGSALL, LLLALVTWGGVAFLLWYGWGA, IIVTLLAVTWLNPHVYLDTFV, WFAFGAVSASVAWFFALALLA, and VINLLVGGVMWFIAFQLARQG.

The protein belongs to the LysE/ArgO transporter (TC 2.A.75) family.

The protein localises to the cell inner membrane. It carries out the reaction L-arginine(in) = L-arginine(out). Its function is as follows. Involved in the export of arginine. Important to control the intracellular level of arginine and the correct balance between arginine and lysine. The polypeptide is Arginine exporter protein ArgO (Yersinia enterocolitica serotype O:8 / biotype 1B (strain NCTC 13174 / 8081)).